A 134-amino-acid chain; its full sequence is Small ribosomal subunit protein uS8c (134 aa).

It belongs to the universal ribosomal protein uS8 family. Part of the 30S ribosomal subunit.

The protein resides in the plastid. The protein localises to the chloroplast. Its function is as follows. One of the primary rRNA binding proteins, it binds directly to 16S rRNA central domain where it helps coordinate assembly of the platform of the 30S subunit. In Phaseolus angularis (Azuki bean), this protein is Small ribosomal subunit protein uS8c (rps8).